The following is a 258-amino-acid chain: tRNA pseudouridine synthase A (258 aa).

Asp53 acts as the Nucleophile in catalysis. Tyr111 lines the substrate pocket.

Belongs to the tRNA pseudouridine synthase TruA family. In terms of assembly, homodimer.

The catalysed reaction is uridine(38/39/40) in tRNA = pseudouridine(38/39/40) in tRNA. Functionally, formation of pseudouridine at positions 38, 39 and 40 in the anticodon stem and loop of transfer RNAs. This is tRNA pseudouridine synthase A from Streptococcus agalactiae serotype Ia (strain ATCC 27591 / A909 / CDC SS700).